The sequence spans 1280 residues: Rho guanine nucleotide exchange factor 10-like protein (1280 aa).

The span at 1-10 (MASSNPPPQP) shows a compositional bias: pro residues. Positions 1 to 94 (MASSNPPPQP…TEAPTVVSNG (94 aa)) are disordered. The span at 26–46 (EVEEDSGEAFEFDDSDEEEDT) shows a compositional bias: acidic residues. S40 carries the phosphoserine modification. The segment covering 78-89 (PAAAPPQTEAPT) has biased composition (low complexity). Y131 and Y152 each carry phosphotyrosine. A disordered region spans residues 161–202 (PRETEDLGWSSSEFESYSEDSGEETKPEAEPTKHRGSFQPKL). Positions 183 to 193 (EETKPEAEPTK) are enriched in basic and acidic residues. Phosphoserine is present on S279. One can recognise a DH domain in the interval 314-501 (VRRHILGSIV…ETLAEKLNEQ (188 aa)). Disordered stretches follow at residues 1133–1163 (QEEA…HTAR) and 1186–1207 (PLLS…SEED).

As to quaternary structure, interacts with RHOA, RHOB and RHOC.

The protein localises to the cytoplasm. Functionally, acts as a guanine nucleotide exchange factor (GEF) for RHOA, RHOB and RHOC. The chain is Rho guanine nucleotide exchange factor 10-like protein (Arhgef10l) from Mus musculus (Mouse).